The following is a 494-amino-acid chain: MVTKAPAKTEYEAVIGLETHCQLSTKTKIFCNCSTAFGADPNHQVCSICMGMPGVLPVLNETVLEYAVKAGRALNCEIAKYSKFDRKQYFYPDLPKNYQVSQFDLPIAEHGWLEVEIVDEQGEATRKKIGITRLHMEEDAGKLVHGGSDRLAGSTHSLVDFNRTGIPLIEIVSEPDMRTGLEAAEYAQEIRRIVRYLGVSDGNMQEGSLRCDVNISVRPRGQKEFGTKVEIKNMNSFSAIHRAIDYEIARQIEAIETGEPIIQETRLWEEGAQRTIGMRSKEGSSDYRYFPEPDLTPIEVAPSLLKQWQSELPELPAAKRHRYEEEIGLSPYDTRILTDDHAITQYFEATLKAGASAKQAANWLMGDITGYLNNESLSITDIALTPEALAELIELIEANTISGKIAKELLPELLTKGGSPKKLVKKKGLTQISDAATLESLIDEVLAAHPQELEQYRNGKTKLQGFFMGQVMKRTSGRADPKATNQMLAKKLKG.

Positions 475 to 494 are disordered; that stretch reads TSGRADPKATNQMLAKKLKG.

Belongs to the GatB/GatE family. GatB subfamily. Heterotrimer of A, B and C subunits.

The catalysed reaction is L-glutamyl-tRNA(Gln) + L-glutamine + ATP + H2O = L-glutaminyl-tRNA(Gln) + L-glutamate + ADP + phosphate + H(+). It catalyses the reaction L-aspartyl-tRNA(Asn) + L-glutamine + ATP + H2O = L-asparaginyl-tRNA(Asn) + L-glutamate + ADP + phosphate + 2 H(+). Allows the formation of correctly charged Asn-tRNA(Asn) or Gln-tRNA(Gln) through the transamidation of misacylated Asp-tRNA(Asn) or Glu-tRNA(Gln) in organisms which lack either or both of asparaginyl-tRNA or glutaminyl-tRNA synthetases. The reaction takes place in the presence of glutamine and ATP through an activated phospho-Asp-tRNA(Asn) or phospho-Glu-tRNA(Gln). The polypeptide is Aspartyl/glutamyl-tRNA(Asn/Gln) amidotransferase subunit B (Acaryochloris marina (strain MBIC 11017)).